Reading from the N-terminus, the 112-residue chain is uncharacterized protein (112 aa).

2 disordered regions span residues 1–53 (MSKL…QRLK) and 80–112 (MINQ…MLEL). Polar residues predominate over residues 8 to 22 (SALQKLIESQKNPNA). Positions 86 to 96 (ETKKRKRKQKK) are enriched in basic residues. Over residues 101–112 (DYGVFEEDMLEL) the composition is skewed to acidic residues.

The protein localises to the nucleus. It localises to the nucleolus. This is an uncharacterized protein from Schizosaccharomyces pombe (strain 972 / ATCC 24843) (Fission yeast).